The chain runs to 298 residues: Ribosomal RNA small subunit methyltransferase A (298 aa).

The S-adenosyl-L-methionine site is built by Asn30, Val32, Gly57, Glu78, Asp108, and Asn126.

It belongs to the class I-like SAM-binding methyltransferase superfamily. rRNA adenine N(6)-methyltransferase family. RsmA subfamily.

The protein resides in the cytoplasm. The catalysed reaction is adenosine(1518)/adenosine(1519) in 16S rRNA + 4 S-adenosyl-L-methionine = N(6)-dimethyladenosine(1518)/N(6)-dimethyladenosine(1519) in 16S rRNA + 4 S-adenosyl-L-homocysteine + 4 H(+). Functionally, specifically dimethylates two adjacent adenosines (A1518 and A1519) in the loop of a conserved hairpin near the 3'-end of 16S rRNA in the 30S particle. May play a critical role in biogenesis of 30S subunits. The protein is Ribosomal RNA small subunit methyltransferase A of Cutibacterium acnes (strain DSM 16379 / KPA171202) (Propionibacterium acnes).